Reading from the N-terminus, the 647-residue chain is Threonine--tRNA ligase (647 aa).

Residues 1–61 (MIKITFPDGA…EEDGSIEIVT (61 aa)) enclose the TGS domain. Positions 240–538 (DHRKLGKELD…LIETYKGAFP (299 aa)) are catalytic. Positions 334, 385, and 515 each coordinate Zn(2+).

This sequence belongs to the class-II aminoacyl-tRNA synthetase family. Homodimer. Zn(2+) serves as cofactor.

The protein localises to the cytoplasm. The catalysed reaction is tRNA(Thr) + L-threonine + ATP = L-threonyl-tRNA(Thr) + AMP + diphosphate + H(+). Its function is as follows. Catalyzes the attachment of threonine to tRNA(Thr) in a two-step reaction: L-threonine is first activated by ATP to form Thr-AMP and then transferred to the acceptor end of tRNA(Thr). Also edits incorrectly charged L-seryl-tRNA(Thr). The chain is Threonine--tRNA ligase from Streptococcus pyogenes serotype M28 (strain MGAS6180).